The chain runs to 222 residues: UPF0502 protein Shewmr7_1629 (222 aa).

The protein belongs to the UPF0502 family.

The polypeptide is UPF0502 protein Shewmr7_1629 (Shewanella sp. (strain MR-7)).